A 388-amino-acid polypeptide reads, in one-letter code: Branched-chain-amino-acid aminotransferase 2, chloroplastic (388 aa).

Residues 1 to 22 constitute a chloroplast transit peptide; that stretch reads MIKTITSLRKTLVLPLHLHIRT. Lysine 235 is modified (N6-(pyridoxal phosphate)lysine).

The protein belongs to the class-IV pyridoxal-phosphate-dependent aminotransferase family. Requires pyridoxal 5'-phosphate as cofactor.

It is found in the plastid. The protein resides in the chloroplast. The enzyme catalyses L-leucine + 2-oxoglutarate = 4-methyl-2-oxopentanoate + L-glutamate. It catalyses the reaction L-isoleucine + 2-oxoglutarate = (S)-3-methyl-2-oxopentanoate + L-glutamate. The catalysed reaction is L-valine + 2-oxoglutarate = 3-methyl-2-oxobutanoate + L-glutamate. Its pathway is amino-acid biosynthesis; L-isoleucine biosynthesis; L-isoleucine from 2-oxobutanoate: step 4/4. The protein operates within amino-acid biosynthesis; L-leucine biosynthesis; L-leucine from 3-methyl-2-oxobutanoate: step 4/4. It functions in the pathway amino-acid biosynthesis; L-valine biosynthesis; L-valine from pyruvate: step 4/4. Converts 2-oxo acids to branched-chain amino acids. Shows activity with L-Leu, L-Ile and L-Val as amino donors and 2-oxoglutarate as an amino acceptor, but no activity for D-isomers of Leu, Ile, Val, Asp, Glu or Ala. The chain is Branched-chain-amino-acid aminotransferase 2, chloroplastic (BCAT2) from Arabidopsis thaliana (Mouse-ear cress).